An 81-amino-acid polypeptide reads, in one-letter code: Photosystem I iron-sulfur center (81 aa).

2 4Fe-4S ferredoxin-type domains span residues 2–31 (SHSVKIYDTCIGCTQCVRACPLDVLEMVPW) and 37–68 (GQIASSPRTEDCVGCKRCETACPTDFLSIRVY). Positions 11, 14, 17, 21, 48, 51, 54, and 58 each coordinate [4Fe-4S] cluster.

In terms of assembly, the cyanobacterial PSI reaction center is composed of one copy each of PsaA,B,C,D,E,F,I,J,K,L,M and X, and forms trimeric complexes. It depends on [4Fe-4S] cluster as a cofactor.

It localises to the cellular thylakoid membrane. The catalysed reaction is reduced [plastocyanin] + hnu + oxidized [2Fe-2S]-[ferredoxin] = oxidized [plastocyanin] + reduced [2Fe-2S]-[ferredoxin]. Apoprotein for the two 4Fe-4S centers FA and FB of photosystem I (PSI); essential for photochemical activity. FB is the terminal electron acceptor of PSI, donating electrons to ferredoxin. The C-terminus interacts with PsaA/B/D and helps assemble the protein into the PSI complex. Required for binding of PsaD and PsaE to PSI. PSI is a plastocyanin/cytochrome c6-ferredoxin oxidoreductase, converting photonic excitation into a charge separation, which transfers an electron from the donor P700 chlorophyll pair to the spectroscopically characterized acceptors A0, A1, FX, FA and FB in turn. The protein is Photosystem I iron-sulfur center of Synechococcus sp. (strain RCC307).